The following is a 44-amino-acid chain: uncharacterized protein (44 aa).

A helical membrane pass occupies residues 4–24; that stretch reads ISSILIRGGGVLIVVILLLWI.

The protein resides in the membrane. This is an uncharacterized protein from Ornithodoros (relapsing fever ticks).